The primary structure comprises 137 residues: Large ribosomal subunit protein uL16 (137 aa).

The tract at residues 1–22 (MLQPKRTKFRKQQKGRNRGLAH) is disordered.

The protein belongs to the universal ribosomal protein uL16 family. Part of the 50S ribosomal subunit.

In terms of biological role, binds 23S rRNA and is also seen to make contacts with the A and possibly P site tRNAs. The chain is Large ribosomal subunit protein uL16 from Saccharophagus degradans (strain 2-40 / ATCC 43961 / DSM 17024).